We begin with the raw amino-acid sequence, 173 residues long: dCTP deaminase, dUMP-forming (173 aa).

DCTP is bound by residues 93-98 (RSSTGR), D111, 119-121 (TLE), Q138, and Y151. E121 functions as the Proton donor/acceptor in the catalytic mechanism.

This sequence belongs to the dCTP deaminase family. As to quaternary structure, homotrimer.

The catalysed reaction is dCTP + 2 H2O = dUMP + NH4(+) + diphosphate. Its pathway is pyrimidine metabolism; dUMP biosynthesis; dUMP from dCTP: step 1/1. Its function is as follows. Bifunctional enzyme that catalyzes both the deamination of dCTP to dUTP and the hydrolysis of dUTP to dUMP without releasing the toxic dUTP intermediate. The chain is dCTP deaminase, dUMP-forming from Clostridium beijerinckii (strain ATCC 51743 / NCIMB 8052) (Clostridium acetobutylicum).